The sequence spans 323 residues: Probable cell division protein WhiA (323 aa).

The segment at residues 279–313 is a DNA-binding region (H-T-H motif); the sequence is TLKELGEMVSGGKISKSGINHRLRKLDEIAERLRA.

It belongs to the WhiA family.

Involved in cell division and chromosome segregation. The protein is Probable cell division protein WhiA of Anoxybacillus flavithermus (strain DSM 21510 / WK1).